Consider the following 118-residue polypeptide: uncharacterized protein (118 aa).

It to E.coli YeaO.

This is an uncharacterized protein from Mycobacterium bovis (strain ATCC BAA-935 / AF2122/97).